Here is a 99-residue protein sequence, read N- to C-terminus: MSDFPPSYQQHENDRMVPQESSTSNNASEFNVPKKSNRRLSVVQQDESVLNREFDDLTPEVGFDADKWERKTKHPNPQKPFDFKRKPEKKYHSKSDVGF.

The tract at residues 1-99 is disordered; sequence MSDFPPSYQQ…KYHSKSDVGF (99 aa). The span at 19–29 shows a compositional bias: polar residues; sequence QESSTSNNASE.

This is an uncharacterized protein from Schizosaccharomyces pombe (strain 972 / ATCC 24843) (Fission yeast).